Consider the following 607-residue polypeptide: WD repeat-containing protein 1-A (607 aa).

13 WD repeats span residues 4-45, 48-87, 93-135, 138-176, 180-218, 224-263, 270-306, 311-351, 358-408, 432-474, 480-518, 523-561, and 566-604; these read ELKK…IRNI, PAIA…IWDT, LLKY…LWDT, SVGE…FLEG, KFKF…LYDG, VCSL…IWDV, TTFN…YLDK, RPLR…YWDA, TFTG…KMDV, LKDK…LYSI, KDEG…VFSV, SEKN…VWTL, and TRIK…QWTV.

This sequence belongs to the WD repeat AIP1 family.

The protein resides in the cell membrane. It localises to the cytoplasm. It is found in the cytoskeleton. Its subcellular location is the nucleus. In terms of biological role, induces disassembly of actin filaments in conjunction with ADF/cofilin family proteins. Doesn't sever actin filaments alone, but caps the barbed ends of filaments severed by cofilin, which blocks annealing and depolymerization and allows more extensive severing by cofilin. In Xenopus laevis (African clawed frog), this protein is WD repeat-containing protein 1-A (wdr1-a).